A 511-amino-acid polypeptide reads, in one-letter code: Maturase K (511 aa).

This sequence belongs to the intron maturase 2 family. MatK subfamily.

Its subcellular location is the plastid. The protein resides in the chloroplast. Its function is as follows. Usually encoded in the trnK tRNA gene intron. Probably assists in splicing its own and other chloroplast group II introns. This is Maturase K from Hordeum murinum subsp. leporinum (Mouse barley).